The primary structure comprises 415 residues: Serine hydroxymethyltransferase (415 aa).

(6S)-5,6,7,8-tetrahydrofolate contacts are provided by residues Leu-118 and 122-124 (GHL). An N6-(pyridoxal phosphate)lysine modification is found at Lys-227.

It belongs to the SHMT family. In terms of assembly, homodimer. Requires pyridoxal 5'-phosphate as cofactor.

The protein localises to the cytoplasm. It carries out the reaction (6R)-5,10-methylene-5,6,7,8-tetrahydrofolate + glycine + H2O = (6S)-5,6,7,8-tetrahydrofolate + L-serine. It functions in the pathway one-carbon metabolism; tetrahydrofolate interconversion. It participates in amino-acid biosynthesis; glycine biosynthesis; glycine from L-serine: step 1/1. Its function is as follows. Catalyzes the reversible interconversion of serine and glycine with tetrahydrofolate (THF) serving as the one-carbon carrier. This reaction serves as the major source of one-carbon groups required for the biosynthesis of purines, thymidylate, methionine, and other important biomolecules. Also exhibits THF-independent aldolase activity toward beta-hydroxyamino acids, producing glycine and aldehydes, via a retro-aldol mechanism. In Elusimicrobium minutum (strain Pei191), this protein is Serine hydroxymethyltransferase.